The chain runs to 913 residues: DNA mismatch repair protein MutS (913 aa).

The tract at residues 18-50 is disordered; the sequence is NNKQKEKTKIPEDLSLEDLKKESQKRPRQRKNS. Residues 19-42 show a composition bias toward basic and acidic residues; sequence NKQKEKTKIPEDLSLEDLKKESQK. 720–727 contacts ATP; it reads GPNASGKS.

The protein belongs to the DNA mismatch repair MutS family.

In terms of biological role, this protein is involved in the repair of mismatches in DNA. It is possible that it carries out the mismatch recognition step. This protein has a weak ATPase activity. The protein is DNA mismatch repair protein MutS of Prochlorococcus marinus (strain MIT 9301).